The following is a 1191-amino-acid chain: DNA topoisomerase 2 (1191 aa).

Residues Asn-64, Asn-95, and 142–149 (GTNGVGLK) contribute to the ATP site. Mg(2+) contacts are provided by Glu-437, Asp-538, and Asp-540. The region spanning 706-1173 (IPNFLDGMTR…PGASVWLEEI (468 aa)) is the Topo IIA-type catalytic domain. The O-(5'-phospho-DNA)-tyrosine intermediate role is filled by Tyr-799.

This sequence belongs to the type II topoisomerase family. The cofactor is Mg(2+). It depends on Mn(2+) as a cofactor. Requires Ca(2+) as cofactor.

It localises to the host cytoplasm. It carries out the reaction ATP-dependent breakage, passage and rejoining of double-stranded DNA.. In terms of biological role, type II topoisomerase. Processively relaxes supercoiled DNA. Displays DNA-supercoiling activity only when associated with the viral histone-like protein. This Ornithodoros (relapsing fever ticks) protein is DNA topoisomerase 2.